The primary structure comprises 60 residues: Large ribosomal subunit protein uL30 (60 aa).

It belongs to the universal ribosomal protein uL30 family. In terms of assembly, part of the 50S ribosomal subunit.

The polypeptide is Large ribosomal subunit protein uL30 (Streptococcus pneumoniae serotype 2 (strain D39 / NCTC 7466)).